We begin with the raw amino-acid sequence, 129 residues long: Ribosome-binding factor A (129 aa).

This sequence belongs to the RbfA family. In terms of assembly, monomer. Binds 30S ribosomal subunits, but not 50S ribosomal subunits or 70S ribosomes.

It localises to the cytoplasm. One of several proteins that assist in the late maturation steps of the functional core of the 30S ribosomal subunit. Associates with free 30S ribosomal subunits (but not with 30S subunits that are part of 70S ribosomes or polysomes). Required for efficient processing of 16S rRNA. May interact with the 5'-terminal helix region of 16S rRNA. This chain is Ribosome-binding factor A, found in Thioalkalivibrio sulfidiphilus (strain HL-EbGR7).